We begin with the raw amino-acid sequence, 148 residues long: MKIILTQEVSGLGAPGDIVEVKNGYGRNYLLPQGFAIAWTKGAEKQVTLIKRARSAREIRDLGHANEVKGQLEGLKVTLKARAGDGGRLFGSVTAAEIVAAVKAAGGPTLDRRRLELPSHIKSIGSYPVRIKLHPEVTAAFDLSVVQG.

This sequence belongs to the bacterial ribosomal protein bL9 family.

Its function is as follows. Binds to the 23S rRNA. The polypeptide is Large ribosomal subunit protein bL9 (Salinispora arenicola (strain CNS-205)).